Here is a 228-residue protein sequence, read N- to C-terminus: Translation initiation factor 6 (228 aa).

Binds to the 50S ribosomal subunit and prevents its association with the 30S ribosomal subunit to form the 70S initiation complex. The sequence is that of Translation initiation factor 6 from Methanocaldococcus jannaschii (strain ATCC 43067 / DSM 2661 / JAL-1 / JCM 10045 / NBRC 100440) (Methanococcus jannaschii).